We begin with the raw amino-acid sequence, 81 residues long: MSHSVKIYDTCIGCTQCVRACPTDVLEMIPWDGCKAKQIAPAPRTEDCVGCKRCESACPTDFLSVRVYLCHETTRSMGLAY.

4Fe-4S ferredoxin-type domains follow at residues 2-31 (SHSV…MIPW) and 39-68 (IAPA…VRVY). Residues cysteine 11, cysteine 14, cysteine 17, cysteine 21, cysteine 48, cysteine 51, cysteine 54, and cysteine 58 each coordinate [4Fe-4S] cluster.

In terms of assembly, the eukaryotic PSI reaction center is composed of at least 11 subunits. [4Fe-4S] cluster is required as a cofactor.

It localises to the plastid. Its subcellular location is the chloroplast thylakoid membrane. The enzyme catalyses reduced [plastocyanin] + hnu + oxidized [2Fe-2S]-[ferredoxin] = oxidized [plastocyanin] + reduced [2Fe-2S]-[ferredoxin]. Its function is as follows. Apoprotein for the two 4Fe-4S centers FA and FB of photosystem I (PSI); essential for photochemical activity. FB is the terminal electron acceptor of PSI, donating electrons to ferredoxin. The C-terminus interacts with PsaA/B/D and helps assemble the protein into the PSI complex. Required for binding of PsaD and PsaE to PSI. PSI is a plastocyanin-ferredoxin oxidoreductase, converting photonic excitation into a charge separation, which transfers an electron from the donor P700 chlorophyll pair to the spectroscopically characterized acceptors A0, A1, FX, FA and FB in turn. The polypeptide is Photosystem I iron-sulfur center (Drimys granadensis).